The primary structure comprises 358 residues: Acetylxylan esterase / glucomannan deacetylase (358 aa).

A signal peptide spans 1-18 (MKLLFPILLLTGSYFLSA). Residue Cys19 is the site of N-palmitoyl cysteine attachment. Cys19 is lipidated: S-diacylglycerol cysteine. Ser160 acts as the Nucleophile in catalysis. Catalysis depends on charge relay system residues Asp333 and His335.

The protein belongs to the carbohydrate esterase 2 (CE2) family.

The protein localises to the cell membrane. The catalysed reaction is Deacetylation of xylans and xylo-oligosaccharides.. The protein operates within glycan degradation; xylan degradation. Involved in the degradation of plant cell wall polysaccharides. Catalyzes the deacetylation of acetylated birchwood xylan and glucomannan, with equal efficiency, and of the synthetic substrate 4-nitrophenyl acetate (4-NPAc). Does not bind cellulose, cellohexaose and beta-glucan. The sequence is that of Acetylxylan esterase / glucomannan deacetylase from Cellvibrio japonicus (strain Ueda107) (Pseudomonas fluorescens subsp. cellulosa).